Here is a 198-residue protein sequence, read N- to C-terminus: FMN-dependent NADH:quinone oxidoreductase (198 aa).

FMN-binding positions include Ser10, 16–18, 94–97, and 138–141; these read SQS, MYNF, and TRGG.

It belongs to the azoreductase type 1 family. As to quaternary structure, homodimer. FMN is required as a cofactor.

It catalyses the reaction 2 a quinone + NADH + H(+) = 2 a 1,4-benzosemiquinone + NAD(+). The catalysed reaction is N,N-dimethyl-1,4-phenylenediamine + anthranilate + 2 NAD(+) = 2-(4-dimethylaminophenyl)diazenylbenzoate + 2 NADH + 2 H(+). In terms of biological role, quinone reductase that provides resistance to thiol-specific stress caused by electrophilic quinones. Also exhibits azoreductase activity. Catalyzes the reductive cleavage of the azo bond in aromatic azo compounds to the corresponding amines. This Shewanella oneidensis (strain ATCC 700550 / JCM 31522 / CIP 106686 / LMG 19005 / NCIMB 14063 / MR-1) protein is FMN-dependent NADH:quinone oxidoreductase.